A 613-amino-acid chain; its full sequence is Transcription factor Sp2 (613 aa).

Residues 1–32 form a disordered region; sequence MSDPQTSMAATAAVSPSDYLQPAASTTQDSQP. Residues 23 to 32 are compositionally biased toward polar residues; it reads AASTTQDSQP. At Ser-78 the chain carries Phosphoserine. Residues 225-235 show a composition bias toward polar residues; that stretch reads TGAPTQLLTES. Residues 225–258 are disordered; sequence TGAPTQLLTESPPTPLSKTNKKARKKSLPASQPP. Positions 361 to 369 match the 9aaTAD; inactive motif; that stretch reads GEVQTVLVQ. The segment covering 372 to 389 has biased composition (low complexity); sequence PPATAAATSNTTCSSPAS. The tract at residues 372 to 404 is disordered; the sequence is PPATAAATSNTTCSSPASRAPHLSGTSKKHSAA. C2H2-type zinc fingers lie at residues 525–549, 555–579, and 585–607; these read HVCHIPDCGKTFRKTSLLRAHVRLH, FVCNWFFCGKRFTRSDELQRHARTH, and FECAQCQKRFMRSDHLTKHYKTH.

It belongs to the Sp1 C2H2-type zinc-finger protein family.

The protein localises to the nucleus. Its function is as follows. Binds to GC box promoters elements and selectively activates mRNA synthesis from genes that contain functional recognition sites. This Homo sapiens (Human) protein is Transcription factor Sp2 (SP2).